Consider the following 122-residue polypeptide: Small ribosomal subunit protein uS12 (122 aa).

A 3-methylthioaspartic acid modification is found at Asp-89.

Belongs to the universal ribosomal protein uS12 family. As to quaternary structure, part of the 30S ribosomal subunit. Contacts proteins S8 and S17. May interact with IF1 in the 30S initiation complex.

With S4 and S5 plays an important role in translational accuracy. In terms of biological role, interacts with and stabilizes bases of the 16S rRNA that are involved in tRNA selection in the A site and with the mRNA backbone. Located at the interface of the 30S and 50S subunits, it traverses the body of the 30S subunit contacting proteins on the other side and probably holding the rRNA structure together. The combined cluster of proteins S8, S12 and S17 appears to hold together the shoulder and platform of the 30S subunit. This chain is Small ribosomal subunit protein uS12, found in Corynebacterium glutamicum (strain R).